We begin with the raw amino-acid sequence, 411 residues long: Endo-1,4-beta-xylanase A (411 aa).

The N-terminal stretch at 1 to 33 (MKKFKIRKLMARVLALALVFSTFFMVSKVDANA) is a signal peptide. The GH10 domain occupies 34 to 382 (ASYNLMETYG…KPAYDEVVKA (349 aa)). Glu-201 (proton donor) is an active-site residue. Glu-311 serves as the catalytic Nucleophile. A disordered region spans residues 387–411 (FGNPGSFTPQPTITPQPTPTPSGQT). The segment covering 398–411 (TITPQPTPTPSGQT) has biased composition (pro residues).

The protein belongs to the glycosyl hydrolase 10 (cellulase F) family.

The catalysed reaction is Endohydrolysis of (1-&gt;4)-beta-D-xylosidic linkages in xylans.. It participates in glycan degradation; xylan degradation. Its function is as follows. B.fibrisolvens is located in the rumen of ruminant animals, where it contributes to the animal's digestion of plant material by hydrolyzing hemicellulose with its xylanases. This Butyrivibrio fibrisolvens protein is Endo-1,4-beta-xylanase A (xynA).